The primary structure comprises 470 residues: Argininosuccinate lyase (470 aa).

Belongs to the lyase 1 family. Argininosuccinate lyase subfamily.

It is found in the cytoplasm. It catalyses the reaction 2-(N(omega)-L-arginino)succinate = fumarate + L-arginine. It functions in the pathway amino-acid biosynthesis; L-arginine biosynthesis; L-arginine from L-ornithine and carbamoyl phosphate: step 3/3. The protein is Argininosuccinate lyase of Prochlorococcus marinus (strain MIT 9303).